Here is a 363-residue protein sequence, read N- to C-terminus: Fructose-bisphosphate aldolase (363 aa).

The substrate site is built by arginine 56 and lysine 147. Catalysis depends on glutamate 188, which acts as the Proton acceptor. Lysine 230 functions as the Schiff-base intermediate with dihydroxyacetone-P in the catalytic mechanism.

It belongs to the class I fructose-bisphosphate aldolase family.

It carries out the reaction beta-D-fructose 1,6-bisphosphate = D-glyceraldehyde 3-phosphate + dihydroxyacetone phosphate. It participates in carbohydrate degradation; glycolysis; D-glyceraldehyde 3-phosphate and glycerone phosphate from D-glucose: step 4/4. The chain is Fructose-bisphosphate aldolase (FBPA) from Echinococcus multilocularis (Fox tapeworm).